Reading from the N-terminus, the 253-residue chain is MLKTRIIPCLDVADGRVVKGVNFVDLRDAGDPVDAAIAYDAAGADELCFLDITATHENRATMFDVVTRTAEHCYIPLTVGGGVRSVSDVRALLLAGADKVSFNSAAVANPDVVAQAADQFGSQCIVVAIDAKTTSPGKWEIFTHGGRKPTGIDAVAFAQTVTAKGAGEILLTSMDRDGTRAGFNLPLTRAISDAVNVPVIASGGVGTLDHLVEGVTKGGASAVLAASIFHFGDYTIAQAKQHMSDAGIPMRLI.

Catalysis depends on residues Asp11 and Asp130.

Belongs to the HisA/HisF family. Heterodimer of HisH and HisF.

It localises to the cytoplasm. It carries out the reaction 5-[(5-phospho-1-deoxy-D-ribulos-1-ylimino)methylamino]-1-(5-phospho-beta-D-ribosyl)imidazole-4-carboxamide + L-glutamine = D-erythro-1-(imidazol-4-yl)glycerol 3-phosphate + 5-amino-1-(5-phospho-beta-D-ribosyl)imidazole-4-carboxamide + L-glutamate + H(+). Its pathway is amino-acid biosynthesis; L-histidine biosynthesis; L-histidine from 5-phospho-alpha-D-ribose 1-diphosphate: step 5/9. Its function is as follows. IGPS catalyzes the conversion of PRFAR and glutamine to IGP, AICAR and glutamate. The HisF subunit catalyzes the cyclization activity that produces IGP and AICAR from PRFAR using the ammonia provided by the HisH subunit. In Roseobacter denitrificans (strain ATCC 33942 / OCh 114) (Erythrobacter sp. (strain OCh 114)), this protein is Imidazole glycerol phosphate synthase subunit HisF.